The following is a 150-amino-acid chain: MIIEEIVGNVANLSEEEKQKHIEKVYLENSDLVKRIQRVTTDHGNEIGIRLKNPVDLEYGDILYQDDHNMIVVDVNSEDILVIQPRTLKEMGDIAHQLGNRHLPTQFTENEMLVQYDYLVEDLLKSLGIPYTREDRKVNKAFRHIGHSHD.

It belongs to the UreE family.

Its subcellular location is the cytoplasm. Functionally, involved in urease metallocenter assembly. Binds nickel. Probably functions as a nickel donor during metallocenter assembly. This Staphylococcus carnosus (strain TM300) protein is Urease accessory protein UreE.